We begin with the raw amino-acid sequence, 156 residues long: 2-C-methyl-D-erythritol 2,4-cyclodiphosphate synthase (156 aa).

The a divalent metal cation site is built by Asp-8 and His-10. 4-CDP-2-C-methyl-D-erythritol 2-phosphate-binding positions include 8–10 and 34–35; these read DVH and HS. His-42 serves as a coordination point for a divalent metal cation. 4-CDP-2-C-methyl-D-erythritol 2-phosphate contacts are provided by residues 56–58, 61–65, 100–106, 132–135, and Phe-139; these read DIG, FPDTD, AQRPKMA, and TTEE.

Belongs to the IspF family. Homotrimer. A divalent metal cation is required as a cofactor.

The enzyme catalyses 4-CDP-2-C-methyl-D-erythritol 2-phosphate = 2-C-methyl-D-erythritol 2,4-cyclic diphosphate + CMP. It participates in isoprenoid biosynthesis; isopentenyl diphosphate biosynthesis via DXP pathway; isopentenyl diphosphate from 1-deoxy-D-xylulose 5-phosphate: step 4/6. Functionally, involved in the biosynthesis of isopentenyl diphosphate (IPP) and dimethylallyl diphosphate (DMAPP), two major building blocks of isoprenoid compounds. Catalyzes the conversion of 4-diphosphocytidyl-2-C-methyl-D-erythritol 2-phosphate (CDP-ME2P) to 2-C-methyl-D-erythritol 2,4-cyclodiphosphate (ME-CPP) with a corresponding release of cytidine 5-monophosphate (CMP). The protein is 2-C-methyl-D-erythritol 2,4-cyclodiphosphate synthase of Clostridium perfringens (strain ATCC 13124 / DSM 756 / JCM 1290 / NCIMB 6125 / NCTC 8237 / Type A).